Reading from the N-terminus, the 452-residue chain is MERRIFGLETEYGVTCTYRGQRRLSPDEVARYLFRRVVSWGRSSNVFLRNGARLYLDVGSHPEYATPECDSVADLVAHDRAGERILEGLLVDAEKRLHDEGIAGEIYLFKNNTDSAGNSYGCHENYLVSRHGEFGRLADVLIPFLVTRQLICGAGKVLQTPRGAVYCLSQRAEHIWEGVSSATTRSRPIINTRDEPHADAERYRRLHVIVGDSNMNEVTTLLKVGAADIVLRMIESGVVMRDLTLENPIRAIREVSHDITGRRKVRLASGKEISALEIQQEYLAKATEFVERRGGDQTAKRVVELWGRVLSAVETGDLEPVAREIDWVTKLRLIERYQRKHDLPLSHPRVAQMDLAYHDLRRGRGLYGLLERRGQVDRAATDPEIFEAKETPPQTTRARLRGEFIRHAQEKRRDFTVDWVHLKLNDQAQRTVLCKDPFRAYDERVERLIASM.

Residue Glu9 participates in Mg(2+) binding. Arg53 provides a ligand contact to ATP. Tyr55 provides a ligand contact to Mg(2+). Catalysis depends on Asp57, which acts as the Proton acceptor. Position 63 (Glu63) interacts with Mg(2+). Positions 66 and 419 each coordinate ATP.

Belongs to the Pup ligase/Pup deamidase family. Pup-conjugating enzyme subfamily.

It carries out the reaction ATP + [prokaryotic ubiquitin-like protein]-L-glutamate + [protein]-L-lysine = ADP + phosphate + N(6)-([prokaryotic ubiquitin-like protein]-gamma-L-glutamyl)-[protein]-L-lysine.. The protein operates within protein degradation; proteasomal Pup-dependent pathway. It participates in protein modification; protein pupylation. Functionally, catalyzes the covalent attachment of the prokaryotic ubiquitin-like protein modifier Pup to the proteasomal substrate proteins, thereby targeting them for proteasomal degradation. This tagging system is termed pupylation. The ligation reaction involves the side-chain carboxylate of the C-terminal glutamate of Pup and the side-chain amino group of a substrate lysine. This Salinispora tropica (strain ATCC BAA-916 / DSM 44818 / JCM 13857 / NBRC 105044 / CNB-440) protein is Pup--protein ligase.